The following is a 396-amino-acid chain: Tryptophan synthase beta chain (396 aa).

Residue lysine 86 is modified to N6-(pyridoxal phosphate)lysine.

This sequence belongs to the TrpB family. In terms of assembly, tetramer of two alpha and two beta chains. Pyridoxal 5'-phosphate is required as a cofactor.

The catalysed reaction is (1S,2R)-1-C-(indol-3-yl)glycerol 3-phosphate + L-serine = D-glyceraldehyde 3-phosphate + L-tryptophan + H2O. The protein operates within amino-acid biosynthesis; L-tryptophan biosynthesis; L-tryptophan from chorismate: step 5/5. In terms of biological role, the beta subunit is responsible for the synthesis of L-tryptophan from indole and L-serine. This Sodalis glossinidius (strain morsitans) protein is Tryptophan synthase beta chain.